A 318-amino-acid polypeptide reads, in one-letter code: Protoheme IX farnesyltransferase (318 aa).

A run of 9 helical transmembrane segments spans residues 33 to 53, 54 to 74, 102 to 122, 125 to 145, 154 to 174, 181 to 201, 225 to 245, 246 to 266, and 288 to 308; these read VMSLVVFTALVGLVAAPVSVH, PFIGFCAILFIAIGGGASGAL, GEALALGLGLSGLSVMMLALA, VLAGAFLAFTIFFYVVVYTMW, IVIGGAAGAFPPVIGWIAATG, WLMFALTFMWTPPHFWALALF, VHILIYTILLALLALGTAFSN, IGGPIYLAVALVLNALFLLGA, and FFKLSLLYLFLHFGAILAEAL.

The protein belongs to the UbiA prenyltransferase family. Protoheme IX farnesyltransferase subfamily. In terms of assembly, interacts with CtaA.

The protein resides in the cell inner membrane. It carries out the reaction heme b + (2E,6E)-farnesyl diphosphate + H2O = Fe(II)-heme o + diphosphate. Its pathway is porphyrin-containing compound metabolism; heme O biosynthesis; heme O from protoheme: step 1/1. Converts heme B (protoheme IX) to heme O by substitution of the vinyl group on carbon 2 of heme B porphyrin ring with a hydroxyethyl farnesyl side group. This is Protoheme IX farnesyltransferase from Ruegeria pomeroyi (strain ATCC 700808 / DSM 15171 / DSS-3) (Silicibacter pomeroyi).